The chain runs to 81 residues: Large ribosomal subunit protein bL31B (81 aa).

Belongs to the bacterial ribosomal protein bL31 family. Type B subfamily. Part of the 50S ribosomal subunit.

This Exiguobacterium sibiricum (strain DSM 17290 / CCUG 55495 / CIP 109462 / JCM 13490 / 255-15) protein is Large ribosomal subunit protein bL31B.